The primary structure comprises 185 residues: uncharacterized protein (185 aa).

The region spanning 9 to 169 is the N-acetyltransferase domain; the sequence is VILELAKESD…NGREDDKPLL (161 aa).

This is an uncharacterized protein from Bacillus subtilis (strain 168).